Here is an 84-residue protein sequence, read N- to C-terminus: Cytochrome b559 subunit alpha (84 aa).

Residues 2–20 (AGTTGERPFSDIITSVRYW) are Cytoplasmic-facing. A helical transmembrane segment spans residues 21-35 (VIHSITIPALFIAGW). H23 is a binding site for heme. The Lumenal portion of the chain corresponds to 36–84 (LFVSTGLAYDVFGTPRPDSYYAQEQRSIPLVTDRFEAKQQVETFLEQLK).

Belongs to the PsbE/PsbF family. As to quaternary structure, heterodimer of an alpha subunit and a beta subunit. PSII is composed of 1 copy each of membrane proteins PsbA, PsbB, PsbC, PsbD, PsbE, PsbF, PsbH, PsbI, PsbJ, PsbK, PsbL, PsbM, PsbT, PsbX, PsbY, PsbZ, Psb30/Ycf12, peripheral proteins PsbO, CyanoQ (PsbQ), PsbU, PsbV and a large number of cofactors. It forms dimeric complexes. It depends on heme b as a cofactor.

The protein resides in the cellular thylakoid membrane. In terms of biological role, this b-type cytochrome is tightly associated with the reaction center of photosystem II (PSII). PSII is a light-driven water:plastoquinone oxidoreductase that uses light energy to abstract electrons from H(2)O, generating O(2) and a proton gradient subsequently used for ATP formation. It consists of a core antenna complex that captures photons, and an electron transfer chain that converts photonic excitation into a charge separation. In Thermostichus vulcanus (Synechococcus vulcanus), this protein is Cytochrome b559 subunit alpha.